Consider the following 889-residue polypeptide: Protein translocase subunit SecA (889 aa).

ATP-binding positions include Gln-87, 105–109, and Asp-494; that span reads GEGKT. The interval 823–889 is disordered; sequence ESLRPEEADL…RMDKDTKGKR (67 aa). Positions 867–889 are enriched in basic and acidic residues; that stretch reads PRDDRPMNREERRRMDKDTKGKR.

Belongs to the SecA family. In terms of assembly, monomer and homodimer. Part of the essential Sec protein translocation apparatus which comprises SecA, SecYEG and auxiliary proteins SecDF-YajC and YidC.

It is found in the cell inner membrane. It localises to the cytoplasm. It carries out the reaction ATP + H2O + cellular proteinSide 1 = ADP + phosphate + cellular proteinSide 2.. Functionally, part of the Sec protein translocase complex. Interacts with the SecYEG preprotein conducting channel. Has a central role in coupling the hydrolysis of ATP to the transfer of proteins into and across the cell membrane, serving as an ATP-driven molecular motor driving the stepwise translocation of polypeptide chains across the membrane. This Bdellovibrio bacteriovorus (strain ATCC 15356 / DSM 50701 / NCIMB 9529 / HD100) protein is Protein translocase subunit SecA.